The sequence spans 86 residues: Small ribosomal subunit protein bS16 (86 aa).

Belongs to the bacterial ribosomal protein bS16 family.

This is Small ribosomal subunit protein bS16 from Syntrophotalea carbinolica (strain DSM 2380 / NBRC 103641 / GraBd1) (Pelobacter carbinolicus).